We begin with the raw amino-acid sequence, 362 residues long: 3-isopropylmalate dehydrogenase (362 aa).

77–88 contacts NAD(+); that stretch reads GPKWGTGAVRPE. Substrate contacts are provided by Arg-95, Arg-105, Arg-134, and Asp-223. The Mg(2+) site is built by Asp-223, Asp-248, and Asp-252. 287 to 298 is an NAD(+) binding site; that stretch reads GSAPDLPANKVN.

It belongs to the isocitrate and isopropylmalate dehydrogenases family. Homodimer. Mg(2+) serves as cofactor. Requires Mn(2+) as cofactor.

It localises to the cytoplasm. The enzyme catalyses (2R,3S)-3-isopropylmalate + NAD(+) = 4-methyl-2-oxopentanoate + CO2 + NADH. Its pathway is amino-acid biosynthesis; L-leucine biosynthesis; L-leucine from 3-methyl-2-oxobutanoate: step 3/4. Functionally, catalyzes the oxidation of 3-carboxy-2-hydroxy-4-methylpentanoate (3-isopropylmalate) to 3-carboxy-4-methyl-2-oxopentanoate. The product decarboxylates to 4-methyl-2 oxopentanoate. In Kluyveromyces lactis (strain ATCC 8585 / CBS 2359 / DSM 70799 / NBRC 1267 / NRRL Y-1140 / WM37) (Yeast), this protein is 3-isopropylmalate dehydrogenase (LEU2).